Reading from the N-terminus, the 269-residue chain is Undecaprenyl-diphosphatase (269 aa).

Transmembrane regions (helical) follow at residues 3–23 (LLIK…LPIS), 41–61 (FATM…VFYY), 78–98 (GFNL…IGLL), 107–127 (LFSP…MIVI), 148–167 (SLLI…SRSA), 184–204 (AEFS…LSLL), 213–233 (LEWQ…LFVV), and 248–268 (FAYY…EKIV).

Belongs to the UppP family.

The protein localises to the cell membrane. It catalyses the reaction di-trans,octa-cis-undecaprenyl diphosphate + H2O = di-trans,octa-cis-undecaprenyl phosphate + phosphate + H(+). Catalyzes the dephosphorylation of undecaprenyl diphosphate (UPP). Confers resistance to bacitracin. The sequence is that of Undecaprenyl-diphosphatase from Thermoanaerobacter sp. (strain X514).